A 474-amino-acid polypeptide reads, in one-letter code: Uronate isomerase (474 aa).

This sequence belongs to the metallo-dependent hydrolases superfamily. Uronate isomerase family.

The catalysed reaction is D-glucuronate = D-fructuronate. It catalyses the reaction aldehydo-D-galacturonate = keto-D-tagaturonate. Its pathway is carbohydrate metabolism; pentose and glucuronate interconversion. The protein is Uronate isomerase of Photorhabdus laumondii subsp. laumondii (strain DSM 15139 / CIP 105565 / TT01) (Photorhabdus luminescens subsp. laumondii).